A 495-amino-acid chain; its full sequence is Cytochrome P450 710A1 (495 aa).

Residues 5–25 traverse the membrane as a helical segment; it reads VSIFASLAPYLISAFLLFLLV. Cys434 is a heme binding site.

Belongs to the cytochrome P450 family. The cofactor is heme. As to expression, expressed in the vascular tissues of roots, shoots and leaves. Expressed in root tips and sepals. Very low expression in stems and siliques.

It is found in the membrane. It carries out the reaction 5-dehydroepisterol + NADPH + O2 + H(+) = ergosta-5,7,22,24(28)-tetraen-3beta-ol + NADP(+) + 2 H2O. It functions in the pathway steroid biosynthesis; sterol biosynthesis. Required to form the C-22 double bond in the sterol side chain. Possesses in vitro C-22 desaturase activity toward beta-sitosterol and produces stigmasterol. No activity with campesterol. The chain is Cytochrome P450 710A1 from Arabidopsis thaliana (Mouse-ear cress).